The chain runs to 319 residues: G-protein coupled receptor 171 (319 aa).

Over 1 to 21 (MTNSSTFCPVYRDLEPFTYFF) the chain is Extracellular. The N-linked (GlcNAc...) asparagine glycan is linked to N3. A helical transmembrane segment spans residues 22–42 (YLVFLIGIIGSCFATWAFIQK). Over 43-48 (NTNHRC) the chain is Cytoplasmic. Residues 49 to 69 (VSIYLINLLTADFLLTLALPV) traverse the membrane as a helical segment. At 70–89 (KITVDLGVAPWKLRIFHCQV) the chain is on the extracellular side. The helical transmembrane segment at 90 to 110 (TACLIYINMYLSIIFLAFVSI) threads the bilayer. Residues 111–132 (DRCLQLTYSCKIYRIQEPGFAK) lie on the Cytoplasmic side of the membrane. Residues 133–153 (MISAVVWLMVLLIMVPNMIIP) traverse the membrane as a helical segment. Topologically, residues 154-181 (IKDIKEKPNVGCMEFKSEFGRNWHLLTN) are extracellular. A helical transmembrane segment spans residues 182–202 (FISIAIFFNFSAIILISNCLV). At 203–224 (IRQLYRNKDNENYPNVKRALIS) the chain is on the cytoplasmic side. A helical transmembrane segment spans residues 225 to 245 (ILLVTTGYIICFVPYHIVRIP). At 246–268 (YTLSQTEVISDCSTRISLFKAKE) the chain is on the extracellular side. Residues 269-289 (ATLLLAVSNLCFDPILYYHLS) traverse the membrane as a helical segment. Over 290–319 (KAFRLKITETFASHKESKAQKEKPRSENNA) the chain is Cytoplasmic.

The protein belongs to the G-protein coupled receptor 1 family.

The protein localises to the cell membrane. In terms of biological role, G-protein coupled receptor for Big LEN, a 16-amino acid neuropeptide produced from the precursor protein, proSAAS (encoded by PCSK1N). Acts through a G(i)-alpha-mediated pathway in response to bigLEN. Big LEN-GPR171 system plays an important role in regulating feeding and metabolism. Also plays a role in modulating fear and anxiety-like behaviors in the basolateral amygdala. Big LEN-GPR171 modulates the mu-type opioid receptor signaling and antinociception. Acts as a negative regulator T cell function. This Bos taurus (Bovine) protein is G-protein coupled receptor 171 (GPR171).